The following is a 161-amino-acid chain: 6,7-dimethyl-8-ribityllumazine synthase (161 aa).

5-amino-6-(D-ribitylamino)uracil-binding positions include Trp-25, 57–59 (AFE), and 80–82 (VVI). Residue 85–86 (GT) participates in (2S)-2-hydroxy-3-oxobutyl phosphate binding. Catalysis depends on His-88, which acts as the Proton donor. Phe-113 is a 5-amino-6-(D-ribitylamino)uracil binding site. Residue Arg-127 participates in (2S)-2-hydroxy-3-oxobutyl phosphate binding.

It belongs to the DMRL synthase family.

It carries out the reaction (2S)-2-hydroxy-3-oxobutyl phosphate + 5-amino-6-(D-ribitylamino)uracil = 6,7-dimethyl-8-(1-D-ribityl)lumazine + phosphate + 2 H2O + H(+). It participates in cofactor biosynthesis; riboflavin biosynthesis; riboflavin from 2-hydroxy-3-oxobutyl phosphate and 5-amino-6-(D-ribitylamino)uracil: step 1/2. Catalyzes the formation of 6,7-dimethyl-8-ribityllumazine by condensation of 5-amino-6-(D-ribitylamino)uracil with 3,4-dihydroxy-2-butanone 4-phosphate. This is the penultimate step in the biosynthesis of riboflavin. The polypeptide is 6,7-dimethyl-8-ribityllumazine synthase (Kineococcus radiotolerans (strain ATCC BAA-149 / DSM 14245 / SRS30216)).